Reading from the N-terminus, the 182-residue chain is UPF0301 protein MCA0413 1 (182 aa).

Belongs to the UPF0301 (AlgH) family.

This chain is UPF0301 protein MCA0413 1, found in Methylococcus capsulatus (strain ATCC 33009 / NCIMB 11132 / Bath).